The primary structure comprises 992 residues: Translation initiation factor IF-2 (992 aa).

2 disordered regions span residues arginine 154–alanine 173 and alanine 338–serine 399. Residues proline 492 to lysine 661 enclose the tr-type G domain. A G1 region spans residues glycine 501 to threonine 508. Residue glycine 501–threonine 508 coordinates GTP. Residues glycine 526 to histidine 530 are G2. A G3 region spans residues aspartate 547 to glycine 550. GTP contacts are provided by residues aspartate 547–histidine 551 and asparagine 601–aspartate 604. The interval asparagine 601–aspartate 604 is G4. The segment at serine 637 to histidine 639 is G5.

Belongs to the TRAFAC class translation factor GTPase superfamily. Classic translation factor GTPase family. IF-2 subfamily.

The protein resides in the cytoplasm. Functionally, one of the essential components for the initiation of protein synthesis. Protects formylmethionyl-tRNA from spontaneous hydrolysis and promotes its binding to the 30S ribosomal subunits. Also involved in the hydrolysis of GTP during the formation of the 70S ribosomal complex. The chain is Translation initiation factor IF-2 from Polaromonas naphthalenivorans (strain CJ2).